Consider the following 355-residue polypeptide: Trans-enoyl reductase (355 aa).

45–48 is a binding site for NADP(+); it reads VDTK. Position 131–138 (131–138) interacts with substrate; the sequence is ISFMTTGL. NADP(+)-binding positions include 166–169, 189–192, Tyr-207, and 254–255; these read SSAT, SPRN, and LE. 275–279 is a binding site for substrate; that stretch reads GPQML. 344–345 serves as a coordination point for NADP(+); the sequence is IS.

This sequence belongs to the zinc-containing alcohol dehydrogenase family. Monomer.

It catalyses the reaction L-serine + 7 malonyl-CoA + acetyl-CoA + 2 S-adenosyl-L-methionine + ATP + 8 NADPH + 11 H(+) = (5S)-3-[(2E,6R,8E,10E,12E)-2,6-dimethyltetradeca-2,8,10,12-tetraenoyl]-5-(hydroxymethyl)pyrrolidine-2,4-dione + AMP + 2 S-adenosyl-L-homocysteine + 7 CO2 + diphosphate + 8 NADP(+) + 8 CoA + 6 H2O. Its pathway is mycotoxin biosynthesis. In terms of biological role, hybrid PKS-NRPS synthetase; part of the gene cluster that mediates the biosynthesis of trichosetin, a trans-fused decalin-containing tetramic acid with antimicrobial activity. The PKS module of PKS-NRPS1 together with the enoylreductase (ER) catalyze the formation of the polyketide unit which is then conjugated to L-serine by the condensation domain of the PKS-NRPS1 NRPS module. Activity of the Dieckmann cyclase domain (RED) results in release of the Dieckmann product intermediate. Diels-Alderase (DA) is involved in endo-selective Diels-Alder cycloaddition to form the decalin ring, leading to the production of N-desmethylequisetin also called trichosetin. The cluster does not contain the equisetin N-methyltransferase and consequently, trichosetin is isolated as final product. The chain is Trans-enoyl reductase from Gibberella fujikuroi (strain CBS 195.34 / IMI 58289 / NRRL A-6831) (Bakanae and foot rot disease fungus).